A 414-amino-acid chain; its full sequence is Ornithine aminotransferase (414 aa).

An intrachain disulfide couples Cys-154 to Cys-163. Residue Lys-262 is modified to N6-(pyridoxal phosphate)lysine.

Belongs to the class-III pyridoxal-phosphate-dependent aminotransferase family. As to quaternary structure, homodimer. Pyridoxal 5'-phosphate is required as a cofactor. In terms of processing, the disulfide bond between Cys-154 and Cys-163 is reduced by TRX1 which increases OAT catalytic activity.

The protein resides in the cytoplasm. It carries out the reaction a 2-oxocarboxylate + L-ornithine = L-glutamate 5-semialdehyde + an L-alpha-amino acid. The catalysed reaction is L-ornithine + 2-oxoglutarate = L-glutamate 5-semialdehyde + L-glutamate. It participates in amino-acid biosynthesis; L-proline biosynthesis; L-glutamate 5-semialdehyde from L-ornithine: step 1/1. With respect to regulation, unlike for mammalian OATs, activity is increased by TRX1-mediated reduction of the disulfide bond between Cys-154 and Cys-163. Binding to TRX1 may also induce conformational changes that facilitate substrate binding. Functionally, catalyzes the transamination of alpha-ketoglutarate with ornithine or N-acetylornithine and of glutamate-5-semialdehyde with glutamate and alanine. The chain is Ornithine aminotransferase from Plasmodium yoelii yoelii.